A 106-amino-acid chain; its full sequence is NADH dehydrogenase [ubiquinone] 1 alpha subcomplex subunit 8-B (106 aa).

Serine 2 is modified (N-acetylserine). 2 consecutive CHCH domains span residues 26 to 67 and 68 to 106; these read GMRC…LKDL and HQKC…CPLK. 3 short sequence motifs (cx9C motif) span residues 29-39, 49-59, and 71-81; these read CMPENVAFLKC, CLDKGRDVTRC, and CQKEMDDYVGC. 4 disulfide bridges follow: cysteine 29/cysteine 59, cysteine 39/cysteine 49, cysteine 71/cysteine 103, and cysteine 81/cysteine 92. The short motif at 92-103 is the Cx10C motif element; the sequence is CRKEQEAFEKVC.

Belongs to the complex I NDUFA8 subunit family. Complex I is composed of at least 49 different subunits.

It localises to the mitochondrion. The protein resides in the mitochondrion intermembrane space. Accessory subunit of the mitochondrial membrane respiratory chain NADH dehydrogenase (Complex I), that is believed not to be involved in catalysis. Complex I functions in the transfer of electrons from NADH to the respiratory chain. The immediate electron acceptor for the enzyme is believed to be ubiquinone. The chain is NADH dehydrogenase [ubiquinone] 1 alpha subcomplex subunit 8-B from Arabidopsis thaliana (Mouse-ear cress).